Reading from the N-terminus, the 382-residue chain is Succinyl-diaminopimelate desuccinylase (382 aa).

A Zn(2+)-binding site is contributed by H73. Residue D75 is part of the active site. D106 provides a ligand contact to Zn(2+). E140 serves as the catalytic Proton acceptor. Positions 141, 169, and 355 each coordinate Zn(2+).

It belongs to the peptidase M20A family. DapE subfamily. Homodimer. Requires Zn(2+) as cofactor. Co(2+) is required as a cofactor.

It carries out the reaction N-succinyl-(2S,6S)-2,6-diaminopimelate + H2O = (2S,6S)-2,6-diaminopimelate + succinate. The protein operates within amino-acid biosynthesis; L-lysine biosynthesis via DAP pathway; LL-2,6-diaminopimelate from (S)-tetrahydrodipicolinate (succinylase route): step 3/3. In terms of biological role, catalyzes the hydrolysis of N-succinyl-L,L-diaminopimelic acid (SDAP), forming succinate and LL-2,6-diaminopimelate (DAP), an intermediate involved in the bacterial biosynthesis of lysine and meso-diaminopimelic acid, an essential component of bacterial cell walls. The polypeptide is Succinyl-diaminopimelate desuccinylase (Saccharophagus degradans (strain 2-40 / ATCC 43961 / DSM 17024)).